The primary structure comprises 359 residues: Heat-inducible transcription repressor HrcA (359 aa).

This sequence belongs to the HrcA family.

In terms of biological role, negative regulator of class I heat shock genes (grpE-dnaK-dnaJ and groELS operons). Prevents heat-shock induction of these operons. This Rhizobium meliloti (strain 1021) (Ensifer meliloti) protein is Heat-inducible transcription repressor HrcA.